Consider the following 319-residue polypeptide: MATTKPYRVLLYYMYTTIENPEEFAAEHLAFCNSLELKGRILVAKEGINGTCSGTVEQTEKYMEAMNNDPRFDGIVFKIDEADGHAFKKMHVRPRPELVTLRLEDDINPHEITGKYLEPKDFYEAMKQEDTVIIDARNDYEFDLGHFKGAIKPDIESFRELPDWIRENKEVLEGKKILTYCTGGIRCEKFSGWLVREGYEDVSQLHGGIVTYGKDPEVQGELWDGQCYVFDERIAVPVNQKEHVIVGKDYFTGEPCERYVNCANPECNKKILCSEENEAKYLRACSHECRVSPRNRYVIQHELTEEQVAAALEKIEAGK.

Residues 127-221 (KQEDTVIIDA…YGKDPEVQGE (95 aa)) enclose the Rhodanese domain. The Cysteine persulfide intermediate role is filled by C181.

This sequence belongs to the TrhO family.

It carries out the reaction uridine(34) in tRNA + AH2 + O2 = 5-hydroxyuridine(34) in tRNA + A + H2O. Its function is as follows. Catalyzes oxygen-dependent 5-hydroxyuridine (ho5U) modification at position 34 in tRNAs. This chain is tRNA uridine(34) hydroxylase, found in Bacillus cereus (strain ATCC 10987 / NRS 248).